The sequence spans 344 residues: 4'-phosphopantetheinyl transferase NpgA (344 aa).

It belongs to the P-Pant transferase superfamily.

The catalysed reaction is apo-[ACP] + CoA = holo-[ACP] + adenosine 3',5'-bisphosphate + H(+). In terms of biological role, transfers the 4'-phosphopantetheine moiety from coenzyme A to a Ser of an acyl-carrier-protein. The enzyme is able to transfer the cofactor to a broad range of enzymes with acyl- or peptidyl-carrier protein domains. Required for primary biological processes such as growth and asexual/sexual development, and activates target enzymes involved in the synthesis of metabolites such as fatty acids, polyketides and nonribosomal peptides, lysine, siderophore, penicillin, sterigmatocystin, shamixantone, dehydroaustinol, and pigments. This chain is 4'-phosphopantetheinyl transferase NpgA (npgA), found in Emericella nidulans (strain FGSC A4 / ATCC 38163 / CBS 112.46 / NRRL 194 / M139) (Aspergillus nidulans).